Consider the following 282-residue polypeptide: Pantothenate synthetase (282 aa).

26–33 (MGNLHDGH) serves as a coordination point for ATP. Catalysis depends on histidine 33, which acts as the Proton donor. Position 57 (glutamine 57) interacts with (R)-pantoate. Glutamine 57 serves as a coordination point for beta-alanine. 148 to 151 (GKKD) provides a ligand contact to ATP. Glutamine 154 is a (R)-pantoate binding site. 185–188 (LSSR) is a binding site for ATP.

This sequence belongs to the pantothenate synthetase family. As to quaternary structure, homodimer.

It is found in the cytoplasm. The enzyme catalyses (R)-pantoate + beta-alanine + ATP = (R)-pantothenate + AMP + diphosphate + H(+). It participates in cofactor biosynthesis; (R)-pantothenate biosynthesis; (R)-pantothenate from (R)-pantoate and beta-alanine: step 1/1. Its function is as follows. Catalyzes the condensation of pantoate with beta-alanine in an ATP-dependent reaction via a pantoyl-adenylate intermediate. This chain is Pantothenate synthetase, found in Polaromonas sp. (strain JS666 / ATCC BAA-500).